Reading from the N-terminus, the 632-residue chain is MGLTNCCSHEELMSRLVDSVKEISGFSSSRGFIGKIQGDLVRRITLLSPFFEELIDVNVELKKDQITGFEAMRIALDSSLELFRSVNGGSKLFQLFDRDSLVEKFRDMTVEIEAALSQIPYEKIEVSEEVREQVQLLHFQFKRAKERWEESDLQLSHDLAMAENVMDPDPIILKRLSQELQLTTIDELKKESHAIHEYFLSYDGDPDDCFERMSSLLKNLVDFVTMESSDPDPSTGSRIVSRHRSPVIPEYFRCPISLELMKDPVIVSTGQTYERSSIQKWLDAGHKTCPKSQETLLHAGLTPNYVLKSLIALWCESNGIELPQNQGSCRTTKIGGSSSSDCDRTFVLSLLEKLANGTTEQQRAAAGELRLLAKRNVDNRVCIAEAGAIPLLVELLSSPDPRTQEHSVTALLNLSINEGNKGAIVDAGAITDIVEVLKNGSMEARENAAATLFSLSVIDENKVAIGAAGAIQALISLLEEGTRRGKKDAATAIFNLCIYQGNKSRAVKGGIVDPLTRLLKDAGGGMVDEALAILAILSTNQEGKTAIAEAESIPVLVEIIRTGSPRNRENAAAILWYLCIGNIERLNVAREVGADVALKELTENGTDRAKRKAASLLELIQQTEGVAVTTVP.

In terms of domain architecture, U-box spans 247–321 (VIPEYFRCPI…ALWCESNGIE (75 aa)). ARM repeat units follow at residues 377–416 (VDNRVCIAEAGAIPLLVELLSSPDPRTQEHSVTALLNLSI), 418–457 (EGNKGAIVDAGAITDIVEVLKNGSMEARENAAATLFSLSV), 459–498 (DENKVAIGAAGAIQALISLLEEGTRRGKKDAATAIFNLCI), 500–539 (QGNKSRAVKGGIVDPLTRLLKDAGGGMVDEALAILAILST), and 541–580 (QEGKTAIAEAESIPVLVEIIRTGSPRNRENAAAILWYLCI).

As to quaternary structure, homodimer. Interacts with SNL1. Binds to SD11, SD16, SD17, SD18, SD113, SD129 and SD25. Expressed in flowers, green siliques, seeds and rosette leaves.

The catalysed reaction is S-ubiquitinyl-[E2 ubiquitin-conjugating enzyme]-L-cysteine + [acceptor protein]-L-lysine = [E2 ubiquitin-conjugating enzyme]-L-cysteine + N(6)-ubiquitinyl-[acceptor protein]-L-lysine.. Its pathway is protein modification; protein ubiquitination. In terms of biological role, functions as an E3 ubiquitin ligase with specific E2 ubiquitin-conjugating enzymes. Undergoes auto-ubiquitination. The sequence is that of U-box domain-containing protein 14 (PUB14) from Arabidopsis thaliana (Mouse-ear cress).